The following is a 270-amino-acid chain: uncharacterized protein (270 aa).

The active-site Proton donor is the His-171. The active-site Nucleophile is Cys-261.

Belongs to the DDAH family.

This is an uncharacterized protein from Aeropyrum pernix (strain ATCC 700893 / DSM 11879 / JCM 9820 / NBRC 100138 / K1).